Reading from the N-terminus, the 644-residue chain is 3D-(3,5/4)-trihydroxycyclohexane-1,2-dione hydrolase 1 (644 aa).

Glu65 lines the thiamine diphosphate pocket. Residues 442–522 (SLPGDLQRMW…INVLLFDNSG (81 aa)) form a thiamine pyrophosphate binding region. Mg(2+)-binding residues include Asp493 and Asn520.

It belongs to the TPP enzyme family. Mg(2+) is required as a cofactor. It depends on thiamine diphosphate as a cofactor.

The enzyme catalyses 3D-3,5/4-trihydroxycyclohexane-1,2-dione + H2O = 5-deoxy-D-glucuronate + H(+). The protein operates within polyol metabolism; myo-inositol degradation into acetyl-CoA; acetyl-CoA from myo-inositol: step 3/7. Its function is as follows. Involved in the cleavage of the C1-C2 bond of 3D-(3,5/4)-trihydroxycyclohexane-1,2-dione (THcHDO) to yield 5-deoxy-glucuronate (5DG). In Bacillus cereus (strain ZK / E33L), this protein is 3D-(3,5/4)-trihydroxycyclohexane-1,2-dione hydrolase 1.